The chain runs to 174 residues: NADH-ubiquinone oxidoreductase chain 6 (174 aa).

4 helical membrane passes run 24 to 44, 53 to 73, 82 to 102, and 143 to 163; these read LALG…TGLM, ILFL…TSLA, MKLT…SFIM, and FITI…VKIT.

This sequence belongs to the complex I subunit 6 family.

Its subcellular location is the mitochondrion membrane. The enzyme catalyses a ubiquinone + NADH + 5 H(+)(in) = a ubiquinol + NAD(+) + 4 H(+)(out). Core subunit of the mitochondrial membrane respiratory chain NADH dehydrogenase (Complex I) that is believed to belong to the minimal assembly required for catalysis. Complex I functions in the transfer of electrons from NADH to the respiratory chain. The immediate electron acceptor for the enzyme is believed to be ubiquinone. The sequence is that of NADH-ubiquinone oxidoreductase chain 6 (mt:ND6) from Drosophila melanogaster (Fruit fly).